Consider the following 96-residue polypeptide: Prokineticin Bm8-f (96 aa).

Residues 1 to 19 (MKCFAQIVVLLLVIAFSHG) form the signal peptide. 5 disulfide bridges follow: C26/C38, C32/C50, C37/C78, C60/C86, and C80/C95.

This sequence belongs to the AVIT (prokineticin) family. As to expression, expressed by the skin glands.

Its subcellular location is the secreted. In terms of biological role, potent agonist for both PKR1/PROKR1 and PKR2/PROKR2, and inducer of a potent and long-lasting hyperalgesia. Also potentiates capsaicin-induced TRPV1 current, when tested on DRG neurons. At subnanomolar concentrations, this protein both induces potent chemotaxis of macrophages and stimulates LPS-induced production of the pro-inflammatory cytokines IL-1 and IL-12. In vivo, potently stimulates the contraction of the guinea-pig gastrointestinal (GI) smooth muscle (nanomolar concentration). This is Prokineticin Bm8-f from Bombina maxima (Giant fire-bellied toad).